A 302-amino-acid polypeptide reads, in one-letter code: Calpain-1 catalytic subunit (302 aa).

The interval 1 to 114 (RESGCSFVLA…KRAGTQELDD (114 aa)) is domain III. The segment at 115–130 (QIQANLPDEQVLSAEE) is linker. Residues 131 to 301 (IDENFKALFR…LFKWLQLTMF (171 aa)) form a domain IV region. EF-hand domains follow at residues 173–206 (FSMESCRSMVNLMDRDGNGKLGLVEFNILWNRIR), 203–238 (NRIRNYLAIFRKFDLDKSGSMSAYEMRMAIESAGFK), and 268–302 (VRLETMFRFFKTLDTDLDGVVTFDLFKWLQLTMFA). Residues Asp186, Asp188, Asn190, Lys192, Glu197, Asp216, Asp218, Ser220, Ser222, and Glu227 each contribute to the Ca(2+) site.

Belongs to the peptidase C2 family. In terms of assembly, forms a heterodimer with a small (regulatory) subunit CAPNS1. Ca(2+) serves as cofactor. The N-terminus is blocked. Post-translationally, undergoes calcium-induced successive autoproteolytic cleavages that generate a membrane-bound 78 kDa active form and an intracellular 75 kDa active form. Calpastatin reduces with high efficiency the transition from 78 kDa to 75 kDa calpain forms. As to expression, ubiquitous.

It is found in the cytoplasm. It localises to the cell membrane. The catalysed reaction is Broad endopeptidase specificity.. With respect to regulation, activated by micromolar concentrations of calcium and inhibited by calpastatin. Its function is as follows. Calcium-regulated non-lysosomal thiol-protease which catalyzes limited proteolysis of substrates involved in cytoskeletal remodeling and signal transduction. Proteolytically cleaves CTBP1. Cleaves and activates caspase-7 (CASP7). The chain is Calpain-1 catalytic subunit from Oryctolagus cuniculus (Rabbit).